The sequence spans 218 residues: Elongation factor Ts (218 aa).

Residues 82 to 85 form an involved in Mg(2+) ion dislocation from EF-Tu region; that stretch reads TDFV.

The protein belongs to the EF-Ts family.

It localises to the cytoplasm. In terms of biological role, associates with the EF-Tu.GDP complex and induces the exchange of GDP to GTP. It remains bound to the aminoacyl-tRNA.EF-Tu.GTP complex up to the GTP hydrolysis stage on the ribosome. This is Elongation factor Ts from Prochlorococcus marinus (strain MIT 9313).